The chain runs to 352 residues: RNA 3'-terminal phosphate cyclase (352 aa).

ATP is bound by residues Gln102 and 292–296 (HMGDQ). Catalysis depends on His318, which acts as the Tele-AMP-histidine intermediate.

Belongs to the RNA 3'-terminal cyclase family. Type 1 subfamily.

It localises to the cytoplasm. The catalysed reaction is a 3'-end 3'-phospho-ribonucleotide-RNA + ATP = a 3'-end 2',3'-cyclophospho-ribonucleotide-RNA + AMP + diphosphate. In terms of biological role, catalyzes the conversion of 3'-phosphate to a 2',3'-cyclic phosphodiester at the end of RNA. The mechanism of action of the enzyme occurs in 3 steps: (A) adenylation of the enzyme by ATP; (B) transfer of adenylate to an RNA-N3'P to produce RNA-N3'PP5'A; (C) and attack of the adjacent 2'-hydroxyl on the 3'-phosphorus in the diester linkage to produce the cyclic end product. The biological role of this enzyme is unknown but it is likely to function in some aspects of cellular RNA processing. This is RNA 3'-terminal phosphate cyclase from Methanopyrus kandleri (strain AV19 / DSM 6324 / JCM 9639 / NBRC 100938).